The primary structure comprises 263 residues: Fructose-bisphosphate aldolase class 1 (263 aa).

The active-site Schiff-base intermediate with dihydroxyacetone-P is the Lys177.

It belongs to the DeoC/FbaB aldolase family.

The enzyme catalyses beta-D-fructose 1,6-bisphosphate = D-glyceraldehyde 3-phosphate + dihydroxyacetone phosphate. Its function is as follows. Has aldolase activity with fructose 1,6-bisphosphate. May play a role in the biosynthesis of aromatic amino acids (AroAA). This Halobacterium salinarum (strain ATCC 29341 / DSM 671 / R1) protein is Fructose-bisphosphate aldolase class 1 (fba1).